Here is a 519-residue protein sequence, read N- to C-terminus: 2-isopropylmalate synthase (519 aa).

The 263-residue stretch at 5 to 267 (VKIFDTTLRD…NTNIRSHEIS (263 aa)) folds into the Pyruvate carboxyltransferase domain. Residues D14, H202, H204, and N238 each coordinate Mn(2+). The segment at 392 to 519 (KLLYLQASSG…KKQQTQTAGV (128 aa)) is regulatory domain.

This sequence belongs to the alpha-IPM synthase/homocitrate synthase family. LeuA type 1 subfamily. In terms of assembly, homodimer. Mn(2+) is required as a cofactor.

The protein resides in the cytoplasm. The catalysed reaction is 3-methyl-2-oxobutanoate + acetyl-CoA + H2O = (2S)-2-isopropylmalate + CoA + H(+). The protein operates within amino-acid biosynthesis; L-leucine biosynthesis; L-leucine from 3-methyl-2-oxobutanoate: step 1/4. In terms of biological role, catalyzes the condensation of the acetyl group of acetyl-CoA with 3-methyl-2-oxobutanoate (2-ketoisovalerate) to form 3-carboxy-3-hydroxy-4-methylpentanoate (2-isopropylmalate). The polypeptide is 2-isopropylmalate synthase (Pseudoalteromonas atlantica (strain T6c / ATCC BAA-1087)).